A 256-amino-acid chain; its full sequence is Imidazole glycerol phosphate synthase subunit HisF (256 aa).

Residues aspartate 12 and aspartate 131 contribute to the active site.

Belongs to the HisA/HisF family. Heterodimer of HisH and HisF.

It is found in the cytoplasm. The catalysed reaction is 5-[(5-phospho-1-deoxy-D-ribulos-1-ylimino)methylamino]-1-(5-phospho-beta-D-ribosyl)imidazole-4-carboxamide + L-glutamine = D-erythro-1-(imidazol-4-yl)glycerol 3-phosphate + 5-amino-1-(5-phospho-beta-D-ribosyl)imidazole-4-carboxamide + L-glutamate + H(+). It participates in amino-acid biosynthesis; L-histidine biosynthesis; L-histidine from 5-phospho-alpha-D-ribose 1-diphosphate: step 5/9. Functionally, IGPS catalyzes the conversion of PRFAR and glutamine to IGP, AICAR and glutamate. The HisF subunit catalyzes the cyclization activity that produces IGP and AICAR from PRFAR using the ammonia provided by the HisH subunit. This Pseudomonas fluorescens (strain Pf0-1) protein is Imidazole glycerol phosphate synthase subunit HisF.